Reading from the N-terminus, the 338-residue chain is Tryptophan--tRNA ligase (338 aa).

ATP-binding positions include 11–13 and 19–20; these read QPS and GN. A 'HIGH' region motif is present at residues 12 to 20; sequence PSGELSIGN. Aspartate 135 is an L-tryptophan binding site. Residues 147 to 149, valine 189, and 198 to 202 contribute to the ATP site; these read GSD and KMSKS. Positions 198–202 match the 'KMSKS' region motif; sequence KMSKS.

Belongs to the class-I aminoacyl-tRNA synthetase family. Homodimer.

Its subcellular location is the cytoplasm. The enzyme catalyses tRNA(Trp) + L-tryptophan + ATP = L-tryptophyl-tRNA(Trp) + AMP + diphosphate + H(+). Its function is as follows. Catalyzes the attachment of tryptophan to tRNA(Trp). This Vibrio vulnificus (strain CMCP6) protein is Tryptophan--tRNA ligase.